Reading from the N-terminus, the 413-residue chain is Serine hydroxymethyltransferase (413 aa).

(6S)-5,6,7,8-tetrahydrofolate is bound by residues L117 and 121–123 (GHL). Residue K226 is modified to N6-(pyridoxal phosphate)lysine. Position 349 to 351 (349 to 351 (SPF)) interacts with (6S)-5,6,7,8-tetrahydrofolate.

It belongs to the SHMT family. Homodimer. Pyridoxal 5'-phosphate serves as cofactor.

The protein resides in the cytoplasm. It carries out the reaction (6R)-5,10-methylene-5,6,7,8-tetrahydrofolate + glycine + H2O = (6S)-5,6,7,8-tetrahydrofolate + L-serine. The protein operates within one-carbon metabolism; tetrahydrofolate interconversion. It functions in the pathway amino-acid biosynthesis; glycine biosynthesis; glycine from L-serine: step 1/1. Catalyzes the reversible interconversion of serine and glycine with tetrahydrofolate (THF) serving as the one-carbon carrier. This reaction serves as the major source of one-carbon groups required for the biosynthesis of purines, thymidylate, methionine, and other important biomolecules. Also exhibits THF-independent aldolase activity toward beta-hydroxyamino acids, producing glycine and aldehydes, via a retro-aldol mechanism. This is Serine hydroxymethyltransferase from Listeria innocua serovar 6a (strain ATCC BAA-680 / CLIP 11262).